The following is a 209-amino-acid chain: MASMGLQVTGIALAVLGWLAVMLCCALPMWRVTAFIGSNIVTSQTIWEGLWMNCVVQSTGQMQCKVYDSLLALPQDLQAARALVIISIIVAALGVLLSVVGGKCTNCLEDESAKAKTMIVAGVVFLLAGLLVIVPVSWTAHNIIQDFYNPLVASGQKREMGASLYVGWAASGLLLLGGGLLCCNCPPRTDKPYSAKYSAARSAAASNYV.

The Cytoplasmic segment spans residues 1–9 (MASMGLQVT). The interaction with EPHA2 stretch occupies residues 1-103 (MASMGLQVTG…GVLLSVVGGK (103 aa)). The chain crosses the membrane as a helical span at residues 10 to 30 (GIALAVLGWLAVMLCCALPMW). Residues 31-81 (RVTAFIGSNIVTSQTIWEGLWMNCVVQSTGQMQCKVYDSLLALPQDLQAAR) lie on the Extracellular side of the membrane. Cysteine 54 and cysteine 64 are joined by a disulfide. A helical membrane pass occupies residues 82 to 102 (ALVIISIIVAALGVLLSVVGG). The Cytoplasmic portion of the chain corresponds to 103-117 (KCTNCLEDESAKAKT). Residues 118–138 (MIVAGVVFLLAGLLVIVPVSW) form a helical membrane-spanning segment. The Extracellular portion of the chain corresponds to 139 to 160 (TAHNIIQDFYNPLVASGQKREM). A helical membrane pass occupies residues 161–181 (GASLYVGWAASGLLLLGGGLL). Over 182 to 209 (CCNCPPRTDKPYSAKYSAARSAAASNYV) the chain is Cytoplasmic. Tyrosine 208 carries the phosphotyrosine; by EPHA2 modification. The segment at 208 to 209 (YV) is interactions with TJP1, TJP2 and TJP3.

The protein belongs to the claudin family. As to quaternary structure, interacts with EPHA2; phosphorylates CLDN4 and may regulate tight junctions. Directly interacts with TJP1/ZO-1, TJP2/ZO-2 and TJP3/ZO-3. Interacts with CLDN1. Interacts with CLDN8. Post-translationally, phosphorylated. Phosphorylation by EPHA2 is stimulated by EFNA1 and alters interaction with TJP1.

It localises to the cell junction. The protein localises to the tight junction. Its subcellular location is the cell membrane. In terms of biological role, channel-forming tight junction protein that mediates paracellular chloride transport in the kidney. Plays a critical role in the paracellular reabsorption of filtered chloride in the kidney collecting ducts. Claudins play a major role in tight junction-specific obliteration of the intercellular space, through calcium-independent cell-adhesion activity. This Chlorocebus aethiops (Green monkey) protein is Claudin-4 (CLDN4).